A 378-amino-acid polypeptide reads, in one-letter code: UPF0754 membrane protein BCAH187_A1042 (378 aa).

A run of 2 helical transmembrane segments spans residues M1 to T21 and Y357 to L377.

It belongs to the UPF0754 family.

The protein resides in the cell membrane. The polypeptide is UPF0754 membrane protein BCAH187_A1042 (Bacillus cereus (strain AH187)).